The chain runs to 60 residues: UPF0337 protein SSP1134 (60 aa).

Positions 1 to 41 (MADENKFEQAKGNVKETVGNVTDNKELENEGKEDKTSGKAK) are disordered. Over residues 23–41 (DNKELENEGKEDKTSGKAK) the composition is skewed to basic and acidic residues.

Belongs to the UPF0337 (CsbD) family.

The protein is UPF0337 protein SSP1134 of Staphylococcus saprophyticus subsp. saprophyticus (strain ATCC 15305 / DSM 20229 / NCIMB 8711 / NCTC 7292 / S-41).